A 126-amino-acid polypeptide reads, in one-letter code: Heavy metal-associated isoprenylated plant protein 14 (126 aa).

One can recognise an HMA domain in the interval 3-69 (AKNAVLQLSI…LCNTEIVSVD (67 aa)). Cysteine 123 is modified (cysteine methyl ester). Cysteine 123 carries the S-farnesyl cysteine lipid modification. Residues 124-126 (VIM) constitute a propeptide, removed in mature form.

Belongs to the HIPP family.

Probable heavy-metal-binding protein. In Arabidopsis thaliana (Mouse-ear cress), this protein is Heavy metal-associated isoprenylated plant protein 14.